The following is a 213-amino-acid chain: Ethylene-responsive transcription factor WIN1 (213 aa).

Residues Lys-15–Pro-72 constitute a DNA-binding region (AP2/ERF). The span at Asn-70–Glu-80 shows a compositional bias: polar residues. Disordered stretches follow at residues Asn-70–Thr-99 and Ala-159–Ile-213. The segment covering Ala-159 to Pro-174 has biased composition (low complexity).

The protein belongs to the AP2/ERF transcription factor family. ERF subfamily. Mostly expressed in roots, stems and anthers, and, to a lower extent, in leaves, seeds and silks.

The protein localises to the nucleus. In terms of biological role, promotes cuticle formation by inducing the expression of enzymes involved in wax biosynthesis, particularly promoting very-long-chain waxes formation. Confers drought resistance. Acts as a transcriptional activator binding directly to promoter regions of CER2, CER3.2 and KCS1, wax biosynthesis-related genes. Binds to the GCC-box pathogenesis-related promoter element. May be involved in the regulation of gene expression by stress factors and by components of stress signal transduction pathways. The chain is Ethylene-responsive transcription factor WIN1 from Zea mays (Maize).